Here is a 191-residue protein sequence, read N- to C-terminus: Polysulfide reductase chain B (191 aa).

4Fe-4S ferredoxin-type domains are found at residues 5-34, 50-83, and 84-113; these read YGMI…PDSV, GTLS…VNED, and GIVS…VDPV. Residues Cys14, Cys17, Cys20, Cys24, Cys61, Cys64, Cys69, Cys73, Cys93, Cys96, Cys99, Cys103, Cys120, Cys123, Cys136, and Cys140 each contribute to the [4Fe-4S] cluster site.

Functional polysulfide reductase is made up of three different (A, B, and C) subunits.

Its function is as follows. Component of the phosphorylative electron transport system with polysulfide as the terminal acceptor. This Wolinella succinogenes (strain ATCC 29543 / DSM 1740 / CCUG 13145 / JCM 31913 / LMG 7466 / NCTC 11488 / FDC 602W) (Vibrio succinogenes) protein is Polysulfide reductase chain B (psrB).